The following is a 105-amino-acid chain: Serine protease inhibitor Kazal-type 6 (105 aa).

The signal sequence occupies residues 1-23; it reads MKVAGVFLLLSLALLCFFSGEFS. A Pyrrolidone carboxylic acid modification is found at glutamine 24. The region spanning 49-105 is the Kazal-like domain; that stretch reads RLFQINCGEFRDPKVFCTRESDPLCGSDGQTYGNKCAFCKALEKSSGKINLKHRGKC. 3 disulfide bridges follow: cysteine 55/cysteine 87, cysteine 65/cysteine 84, and cysteine 73/cysteine 105.

It is found in the secreted. Serine protease inhibitor selective for kallikreins. Efficiently inhibits KLK4, KLK5, KLK6, KLK7, KLK12, KLK13 and KLK14. Doesn't inhibit KLK8. This chain is Serine protease inhibitor Kazal-type 6 (Spink6), found in Rattus norvegicus (Rat).